A 539-amino-acid chain; its full sequence is Chaperonin GroEL (539 aa).

ATP contacts are provided by residues 29 to 32, 86 to 90, Gly413, 476 to 478, and Asp492; these read TIGP, DGTTT, and NAA.

Belongs to the chaperonin (HSP60) family. As to quaternary structure, forms a cylinder of 14 subunits composed of two heptameric rings stacked back-to-back. Interacts with the co-chaperonin GroES.

The protein localises to the cytoplasm. The enzyme catalyses ATP + H2O + a folded polypeptide = ADP + phosphate + an unfolded polypeptide.. Its function is as follows. Together with its co-chaperonin GroES, plays an essential role in assisting protein folding. The GroEL-GroES system forms a nano-cage that allows encapsulation of the non-native substrate proteins and provides a physical environment optimized to promote and accelerate protein folding. This chain is Chaperonin GroEL, found in Leuconostoc mesenteroides subsp. mesenteroides (strain ATCC 8293 / DSM 20343 / BCRC 11652 / CCM 1803 / JCM 6124 / NCDO 523 / NBRC 100496 / NCIMB 8023 / NCTC 12954 / NRRL B-1118 / 37Y).